Consider the following 726-residue polypeptide: Sister chromatid cohesion protein SCC4 (726 aa).

TPR repeat units lie at residues Ala7–Phe40, Phe88–Val121, Cys132–Ile165, Arg229–Leu262, Pro443–Ala477, Ala531–His564, and Ala572–Leu605. Residues Ser697–Met726 are disordered.

It belongs to the SCC4/mau-2 family. Interacts with SCC2 to form the cohesin loading complex. Expressed ubiquitously.

It is found in the nucleus. The protein resides in the cytoplasm. Its function is as follows. Essential protein required for cell fate determination during embryogenesis. Involved in sister chromatid cohesion. Forms a complex with SCC2, which is required for the association of the cohesin complex with chromosomes. The sequence is that of Sister chromatid cohesion protein SCC4 from Arabidopsis thaliana (Mouse-ear cress).